The primary structure comprises 313 residues: Dimethyladenosine transferase (313 aa).

Residues 1–21 (MPKVKSGAIGRRRGRQEQRRE) form a disordered region. Histidine 37, leucine 39, glycine 64, glutamate 85, aspartate 113, and asparagine 128 together coordinate S-adenosyl-L-methionine.

This sequence belongs to the class I-like SAM-binding methyltransferase superfamily. rRNA adenine N(6)-methyltransferase family. Part of the small subunit (SSU) processome, composed of more than 70 proteins and the RNA chaperone small nucleolar RNA (snoRNA) U3.

It is found in the nucleus. The protein resides in the nucleoplasm. Its subcellular location is the nucleolus. The enzyme catalyses adenosine(1779)/adenosine(1780) in 18S rRNA + 4 S-adenosyl-L-methionine = N(6)-dimethyladenosine(1779)/N(6)-dimethyladenosine(1780) in 18S rRNA + 4 S-adenosyl-L-homocysteine + 4 H(+). In terms of biological role, specifically dimethylates two adjacent adenosines in the loop of a conserved hairpin near the 3'-end of 18S rRNA in the 40S particle. Involved in the pre-rRNA processing steps leading to small-subunit rRNA production independently of its RNA-modifying catalytic activity. Part of the small subunit (SSU) processome, first precursor of the small eukaryotic ribosomal subunit. During the assembly of the SSU processome in the nucleolus, many ribosome biogenesis factors, an RNA chaperone and ribosomal proteins associate with the nascent pre-rRNA and work in concert to generate RNA folding, modifications, rearrangements and cleavage as well as targeted degradation of pre-ribosomal RNA by the RNA exosome. The polypeptide is Dimethyladenosine transferase (Homo sapiens (Human)).